A 96-amino-acid chain; its full sequence is Large ribosomal subunit protein uL15 (96 aa).

This sequence belongs to the universal ribosomal protein uL15 family. Part of the 50S ribosomal subunit.

Functionally, binds to the 23S rRNA. The polypeptide is Large ribosomal subunit protein uL15 (rplO) (Streptomyces scabiei).